An 86-amino-acid polypeptide reads, in one-letter code: Probable oxaloacetate decarboxylase gamma chain 1 (86 aa).

The helical transmembrane segment at 11 to 33 (AATLMVTGMAVVFLFLTLLVYLV) threads the bilayer.

This sequence belongs to the OadG family. Heterotrimer of an alpha, a beta and a gamma subunit. It depends on Na(+) as a cofactor.

The protein resides in the cell membrane. The enzyme catalyses oxaloacetate + 2 Na(+)(in) + H(+) = pyruvate + 2 Na(+)(out) + CO2. Functionally, catalyzes the decarboxylation of oxaloacetate coupled to Na(+) translocation. The chain is Probable oxaloacetate decarboxylase gamma chain 1 (oadG1) from Vibrio cholerae serotype O1 (strain ATCC 39315 / El Tor Inaba N16961).